Reading from the N-terminus, the 454-residue chain is Phosphoglucosamine mutase (454 aa).

Ser-101 acts as the Phosphoserine intermediate in catalysis. Mg(2+) contacts are provided by Ser-101, Asp-243, Asp-245, and Asp-247. A Phosphoserine modification is found at Ser-101.

This sequence belongs to the phosphohexose mutase family. The cofactor is Mg(2+). Activated by phosphorylation.

The catalysed reaction is alpha-D-glucosamine 1-phosphate = D-glucosamine 6-phosphate. Functionally, catalyzes the conversion of glucosamine-6-phosphate to glucosamine-1-phosphate. The sequence is that of Phosphoglucosamine mutase from Citrifermentans bemidjiense (strain ATCC BAA-1014 / DSM 16622 / JCM 12645 / Bem) (Geobacter bemidjiensis).